We begin with the raw amino-acid sequence, 1113 residues long: StAR-related lipid transfer protein 13 (1113 aa).

Residue M1 is modified to N-acetylmethionine. Positions 55 to 122 (QQEIEAKEAC…LNKCASMKLD (68 aa)) constitute an SAM domain. 2 disordered regions span residues 162–254 (LLPR…PTRA) and 307–346 (PNGD…VSTP). Residues 177–188 (MRNTTSSESVLT) show a composition bias toward polar residues. 2 stretches are compositionally biased toward low complexity: residues 197–213 (SIHS…SQPG) and 326–344 (SGKS…SGVS). S411 carries the post-translational modification Phosphoserine. Positions 536 to 549 (FEGNSVSEGRTTPS) are enriched in polar residues. The interval 536 to 580 (FEGNSVSEGRTTPSDVERDVTSLNESEPPGVRDRRDSGVGASLTR) is disordered. The Rho-GAP domain occupies 663-868 (VPLIVHVQRT…HMIMECDRLF (206 aa)). The START domain maps to 899 to 1107 (LEESGATFHT…RNSFQPLIAE (209 aa)).

As to quaternary structure, homodimer. Interacts with TAX1BP1. As to expression, ubiquitously expressed. Underexpressed in hepatocellular carcinoma cells and some breast cancer cell lines.

It is found in the cytoplasm. The protein localises to the membrane. The protein resides in the mitochondrion membrane. It localises to the lipid droplet. GTPase-activating protein for RhoA, and perhaps for Cdc42. May be involved in regulation of cytoskeletal reorganization, cell proliferation and cell motility. Acts a tumor suppressor in hepatocellular carcinoma cells. The sequence is that of StAR-related lipid transfer protein 13 (STARD13) from Homo sapiens (Human).